Reading from the N-terminus, the 439-residue chain is Xylose isomerase (439 aa).

Active-site residues include H98 and D101. Mg(2+) contacts are provided by E229, E265, H268, D293, D304, D306, and D335.

Belongs to the xylose isomerase family. As to quaternary structure, homotetramer. Mg(2+) is required as a cofactor.

It is found in the cytoplasm. It catalyses the reaction alpha-D-xylose = alpha-D-xylulofuranose. Functionally, involved in D-xylose catabolism. The chain is Xylose isomerase (xylA) from Staphylococcus xylosus.